The chain runs to 113 residues: Protein FAM27E3 (113 aa).

The segment at 1–113 (MGIFQLLRDR…YTHRHTHRVL (113 aa)) is disordered. The segment covering 77–99 (QTDRERERNTQRLRDRERRENGR) has biased composition (basic and acidic residues). Over residues 100-113 (HTHTYTHRHTHRVL) the composition is skewed to basic residues.

This sequence belongs to the FAM27 family.

The sequence is that of Protein FAM27E3 (FAM27E3) from Homo sapiens (Human).